The following is a 409-amino-acid chain: Arginine deiminase (409 aa).

Cys-399 (amidino-cysteine intermediate) is an active-site residue.

This sequence belongs to the arginine deiminase family.

The protein localises to the cytoplasm. It catalyses the reaction L-arginine + H2O = L-citrulline + NH4(+). Its pathway is amino-acid degradation; L-arginine degradation via ADI pathway; carbamoyl phosphate from L-arginine: step 1/2. This Latilactobacillus sakei (Lactobacillus sakei) protein is Arginine deiminase (arcA).